The following is a 314-amino-acid chain: GTP cyclohydrolase FolE2 (314 aa).

The segment at 290–314 (DASAWSAPQASAPDQQESFATGNER) is disordered. Low complexity predominate over residues 291–305 (ASAWSAPQASAPDQQ).

Belongs to the GTP cyclohydrolase IV family.

It carries out the reaction GTP + H2O = 7,8-dihydroneopterin 3'-triphosphate + formate + H(+). Its pathway is cofactor biosynthesis; 7,8-dihydroneopterin triphosphate biosynthesis; 7,8-dihydroneopterin triphosphate from GTP: step 1/1. Converts GTP to 7,8-dihydroneopterin triphosphate. This is GTP cyclohydrolase FolE2 from Pseudomonas putida (strain ATCC 700007 / DSM 6899 / JCM 31910 / BCRC 17059 / LMG 24140 / F1).